The primary structure comprises 337 residues: Cell-surface associated glycoprotein DFI1 (337 aa).

Residues 1–21 (MEKLSINNNNNNRRYQSRRFD) are Cytoplasmic-facing. The helical transmembrane segment at 22-42 (GITIIRIVVLVFIVTVSTYFV) threads the bilayer. Residues 43–269 (NSYTCNQPHH…NGGGLSHTNR (227 aa)) are Extracellular-facing. N-linked (GlcNAc...) asparagine glycosylation is found at N53, N65, N87, and N100. Composition is skewed to low complexity over residues 124–220 (SSTF…TSAS) and 241–259 (SVISSSPTASNSNNNKNND). 2 disordered regions span residues 124 to 224 (SSTF…QHVT) and 241 to 265 (SVISSSPTASNSNNNKNNDNGGGLS). The helical transmembrane segment at 270–290 (IVVGVVVGVGGSILIGLLAVL) threads the bilayer. A Glycophorin A motif is present at residues 273 to 277 (GVVVG). Topologically, residues 291-337 (FYLRKRNNRDYEGGWTFWRKNEKLGSDEFFNGELGVRDRNINQGSNF) are cytoplasmic. Positions 301–314 (YEGGWTFWRKNEKL) match the Calmodulin-binding motif.

This sequence belongs to the MID2 like cell wall stress sensor family. In terms of processing, cross-linked to the carbohydrate polymers of the cell wall. O-glycosylated by MNT1 and MNT2. Also N-glycosylated.

The protein localises to the cell membrane. The protein resides in the cell septum. Its subcellular location is the secreted. It is found in the cell wall. Functionally, cell-surface associated glycoprotein that acts as a plasma membrane receptor-type protein which senses the presence of matrix. Binds to calmodulin in response to environmental conditions and initiates a signaling cascade that activates CEK1, thus promoting invasive filamentation. Involved in the maintenance of the cell wall. This Candida albicans (strain SC5314 / ATCC MYA-2876) (Yeast) protein is Cell-surface associated glycoprotein DFI1.